The following is a 546-amino-acid chain: Arginine--tRNA ligase (546 aa).

Positions 117–127 match the 'HIGH' region motif; sequence ANPTGPLHIGR.

Belongs to the class-I aminoacyl-tRNA synthetase family.

The protein resides in the cytoplasm. It catalyses the reaction tRNA(Arg) + L-arginine + ATP = L-arginyl-tRNA(Arg) + AMP + diphosphate. This Thermoplasma acidophilum (strain ATCC 25905 / DSM 1728 / JCM 9062 / NBRC 15155 / AMRC-C165) protein is Arginine--tRNA ligase.